We begin with the raw amino-acid sequence, 316 residues long: Replication initiation protein (316 aa).

This sequence belongs to the initiator RepB protein family.

The polypeptide is Replication initiation protein (repA) (Escherichia coli).